Reading from the N-terminus, the 339-residue chain is D-alanine--D-alanine ligase (339 aa).

An ATP-grasp domain is found at lysine 115–glutamate 327. Lysine 142–histidine 211 is an ATP binding site. Residues aspartate 279, glutamate 293, and asparagine 295 each contribute to the Mg(2+) site.

This sequence belongs to the D-alanine--D-alanine ligase family. The cofactor is Mg(2+). Mn(2+) is required as a cofactor.

Its subcellular location is the cytoplasm. The catalysed reaction is 2 D-alanine + ATP = D-alanyl-D-alanine + ADP + phosphate + H(+). It participates in cell wall biogenesis; peptidoglycan biosynthesis. In terms of biological role, cell wall formation. In Wolbachia sp. subsp. Brugia malayi (strain TRS), this protein is D-alanine--D-alanine ligase.